The chain runs to 582 residues: Protein NARROW LEAF 1 (582 aa).

2 disordered regions span residues 1-26 (MKPS…VDHQ) and 531-582 (GMSP…DLEK). The segment covering 562–572 (LGDREPKRLRS) has biased composition (basic and acidic residues). The short motif at 567 to 573 (PKRLRSD) is the Nuclear localization signal element. Residues 573-582 (DSGSSLDLEK) are compositionally biased toward low complexity.

As to expression, expressed in leaf sheaths, leaf blades, culms and panicles. Preferentially expressed in vascular tissues in leaves and culms.

It localises to the nucleus. Its subcellular location is the nucleoplasm. It is found in the cytoplasm. Involved in the regulation of lateral leaf growth. May be involved in the regulation of basipetal polar auxin transport (PAT) and vascular patterning in leaves. Controls photosynthesis rate by regulating carboxylation efficiency and consequently photosynthesis rate. Controls panicle and spikelet numbers, and grain yield. This chain is Protein NARROW LEAF 1, found in Oryza sativa subsp. japonica (Rice).